Consider the following 208-residue polypeptide: Granulocyte colony-stimulating factor (208 aa).

Residues 1–30 form the signal peptide; the sequence is MAQLSAQRRMKLMALQLLLWQSALWSGREA. Disulfide bonds link Cys72–Cys78 and Cys100–Cys110. O-linked (GalNAc...) threonine glycosylation is present at Thr169.

It belongs to the IL-6 superfamily. As to quaternary structure, monomer. O-glycosylated.

It is found in the secreted. In terms of biological role, granulocyte/macrophage colony-stimulating factors are cytokines that act in hematopoiesis by controlling the production, differentiation, and function of 2 related white cell populations of the blood, the granulocytes and the monocytes-macrophages. This CSF induces granulocytes. In Mus musculus (Mouse), this protein is Granulocyte colony-stimulating factor (Csf3).